The primary structure comprises 259 residues: MTTFTVIIPARFASSRLPGKPLADIAGKPMIRHVWEKARRSGASRVVVATDNEQVKNAVLQFGGEVCMTSEKHNSGTERLAEVVEKLDIADDEIIVNIQGDEPLIPPVIVQQVAANLAKYRVNMASLAVKIEDVQELFNPNAVKVLTDQAGYVLYFSRAAIPWNRDEFADIAANTKNLDDLRLGDHYLRHIGIYAYRAGFIKRYVQWQPTALEKIESLEQLRVLWYGERIHVELAEEVPAVGVDTPEDLEKVRSILTAF.

Belongs to the KdsB family.

It is found in the cytoplasm. It carries out the reaction 3-deoxy-alpha-D-manno-oct-2-ulosonate + CTP = CMP-3-deoxy-beta-D-manno-octulosonate + diphosphate. The protein operates within nucleotide-sugar biosynthesis; CMP-3-deoxy-D-manno-octulosonate biosynthesis; CMP-3-deoxy-D-manno-octulosonate from 3-deoxy-D-manno-octulosonate and CTP: step 1/1. It functions in the pathway bacterial outer membrane biogenesis; lipopolysaccharide biosynthesis. Activates KDO (a required 8-carbon sugar) for incorporation into bacterial lipopolysaccharide in Gram-negative bacteria. In Actinobacillus succinogenes (strain ATCC 55618 / DSM 22257 / CCUG 43843 / 130Z), this protein is 3-deoxy-manno-octulosonate cytidylyltransferase.